The following is a 180-amino-acid chain: Ribulose bisphosphate carboxylase small subunit, chloroplastic 3 (180 aa).

The transit peptide at methionine 1–lysine 56 directs the protein to the chloroplast.

It belongs to the RuBisCO small chain family. In terms of assembly, heterohexadecamer of 8 large and 8 small subunits.

It localises to the plastid. The protein localises to the chloroplast. In terms of biological role, ruBisCO catalyzes two reactions: the carboxylation of D-ribulose 1,5-bisphosphate, the primary event in carbon dioxide fixation, as well as the oxidative fragmentation of the pentose substrate. Both reactions occur simultaneously and in competition at the same active site. Although the small subunit is not catalytic it is essential for maximal activity. Binds to abscisic acid (ABA); only half of the possible binding sites are occupied in the crystal; and there are indications this is a low affinity site. The chain is Ribulose bisphosphate carboxylase small subunit, chloroplastic 3 (RBCS.3A) from Pisum sativum (Garden pea).